The following is a 342-amino-acid chain: Alternative oxidase, mitochondrial (342 aa).

Residues 1–20 constitute a mitochondrion transit peptide; sequence MIKTYQYRSILNSRNVGIRF. The chain crosses the membrane as a helical span at residues 135 to 155; that stretch reads LTRCIFLESVAGVPGMVAAFI. 3 residues coordinate Fe cation: glutamate 142, glutamate 181, and histidine 184. Residues 200–220 traverse the membrane as a helical segment; sequence FIIYMGQGVFANLFFLVYLIK. Fe cation is bound by residues glutamate 232, glutamate 287, and histidine 290. 2 stretches are compositionally biased toward basic and acidic residues: residues 308 to 321 and 330 to 342; these read PFAL…KEQQ and PHPE…QMRL. Residues 308–342 form a disordered region; it reads PFALKVEDVPKEQQPDEYSLKTPHPEGWNREQMRL.

This sequence belongs to the alternative oxidase family. As to quaternary structure, homodimer; disulfide-linked. It depends on Fe cation as a cofactor.

It is found in the mitochondrion inner membrane. Its function is as follows. Catalyzes cyanide-resistant oxygen consumption. May increase respiration when the cytochrome respiratory pathway is restricted, or in response to low temperatures. The chain is Alternative oxidase, mitochondrial (AOX1) from Wickerhamomyces anomalus (Yeast).